The following is a 436-amino-acid chain: Cold sensitive U2 snRNA suppressor 1 (436 aa).

Positions 1 to 10 (MARTKSRKRS) are enriched in basic residues. The interval 1-22 (MARTKSRKRSGNNQNKNASVVN) is disordered. Residues 12-22 (NNQNKNASVVN) show a composition bias toward low complexity. Thr104 and Thr112 each carry phosphothreonine. Phosphoserine is present on Ser114. The segment at 374-436 (EFENSKEDTQ…SEKQLYTVLK (63 aa)) is disordered. A compositionally biased stretch (basic and acidic residues) spans 389-408 (GRQDDKIDDEVEHKLDHFQE).

It to mammalian SAP 145. Some, to C.elegans ZK632.11. In terms of assembly, belongs to the CWC complex (or CEF1-associated complex), a spliceosome sub-complex reminiscent of a late-stage spliceosome composed of the U2, U5 and U6 snRNAs and at least BUD13, BUD31, BRR2, CDC40, CEF1, CLF1, CUS1, CWC2, CWC15, CWC21, CWC22, CWC23, CWC24, CWC25, CWC27, ECM2, HSH155, IST3, ISY1, LEA1, MSL1, NTC20, PRP8, PRP9, PRP11, PRP19, PRP21, PRP22, PRP45, PRP46, SLU7, SMB1, SMD1, SMD2, SMD3, SMX2, SMX3, SNT309, SNU114, SPP2, SYF1, SYF2, RSE1 and YJU2. Interacts with RDS3.

It is found in the nucleus. Functionally, essential splicing protein required for U2 snRNP binding to pre-mRNA during spliceosome assembly. This Saccharomyces cerevisiae (strain ATCC 204508 / S288c) (Baker's yeast) protein is Cold sensitive U2 snRNA suppressor 1 (CUS1).